We begin with the raw amino-acid sequence, 171 residues long: Peptide deformylase 1 (171 aa).

2 residues coordinate Fe cation: C99 and H141. E142 is a catalytic residue. H145 is a binding site for Fe cation.

Belongs to the polypeptide deformylase family. Requires Fe(2+) as cofactor.

The catalysed reaction is N-terminal N-formyl-L-methionyl-[peptide] + H2O = N-terminal L-methionyl-[peptide] + formate. In terms of biological role, removes the formyl group from the N-terminal Met of newly synthesized proteins. Requires at least a dipeptide for an efficient rate of reaction. N-terminal L-methionine is a prerequisite for activity but the enzyme has broad specificity at other positions. The polypeptide is Peptide deformylase 1 (Xanthomonas campestris pv. campestris (strain ATCC 33913 / DSM 3586 / NCPPB 528 / LMG 568 / P 25)).